Consider the following 557-residue polypeptide: Eudesmanediol synthase (557 aa).

Mg(2+) contacts are provided by D310 and D314. Residues D310, D314, R450, and N453 each coordinate substrate. Positions 310–314 match the DDXXD motif motif; that stretch reads DDTFD. 2 residues coordinate Mg(2+): N453 and S457.

Belongs to the terpene synthase family. In terms of assembly, monomer. Mg(2+) is required as a cofactor. Requires Mn(2+) as cofactor. Specifically expressed in roots.

The protein resides in the cytoplasm. The enzyme catalyses (2E,6E)-farnesyl diphosphate + 2 H2O = 7-epi-ent-eudesmane-5,11-diol + diphosphate. The protein operates within secondary metabolite biosynthesis; terpenoid biosynthesis. Component of the volatile terpenes biosynthesis pathways. Dihydroxylated sesquiterpenoid synthase that generates dually hydroxylated products directly from (E,E)-farnesyl diphosphate, primarily eudesmane-2,11-diol, along with two closely related structural isomers. This chain is Eudesmanediol synthase, found in Zea mays (Maize).